Consider the following 224-residue polypeptide: Ribonuclease HII (224 aa).

In terms of domain architecture, RNase H type-2 spans 21-223 (RAIAGIDEAG…IRNAALEGEQ (203 aa)). 3 residues coordinate a divalent metal cation: Asp-27, Glu-28, and Asp-124.

It belongs to the RNase HII family. Requires Mn(2+) as cofactor. Mg(2+) is required as a cofactor.

It is found in the cytoplasm. The enzyme catalyses Endonucleolytic cleavage to 5'-phosphomonoester.. Endonuclease that specifically degrades the RNA of RNA-DNA hybrids. The chain is Ribonuclease HII from Roseiflexus castenholzii (strain DSM 13941 / HLO8).